The following is an 87-amino-acid chain: Keratin-associated protein 19-1 (87 aa).

Residues glycine 6–cysteine 72 form a 21 X 2 AA repeats of G-[YCGS] region.

It belongs to the KRTAP type 19 family. Interacts with hair keratins. As to expression, strong expression in narrowly defined pattern restricted to the lower and middle cortical regions of the hair shaft in both developing and cycling hair. During hair follicle regression (catagen), expression levels decrease until expression is no longer detectable in follicles at resting stage (telogen).

Functionally, in the hair cortex, hair keratin intermediate filaments are embedded in an interfilamentous matrix, consisting of hair keratin-associated proteins (KRTAP), which are essential for the formation of a rigid and resistant hair shaft through their extensive disulfide bond cross-linking with abundant cysteine residues of hair keratins. The matrix proteins include the high-sulfur and high-glycine-tyrosine keratins. The polypeptide is Keratin-associated protein 19-1 (Krtap19-1) (Mus musculus (Mouse)).